The primary structure comprises 64 residues: Conotoxin reg3.16 (64 aa).

A signal peptide spans 1 to 19 (MSKLGVFLTICLLLFPLTA). Positions 20-49 (LQLDGDQPADKPAQRKLKILPKRKHWTRFT) are excised as a propeptide. 3 disulfide bridges follow: Cys50-Cys64, Cys51-Cys60, and Cys56-Cys63.

The protein belongs to the conotoxin M superfamily. As to expression, expressed by the venom duct.

Its subcellular location is the secreted. This is Conotoxin reg3.16 from Conus regius (Crown cone).